We begin with the raw amino-acid sequence, 1135 residues long: MQCSPDPEDLLIVPTHDIPSYDESLDPFGPEGHLSLDIDCFSKFMSRSDNRIMSKPIIVRGIPWRILAICRNQQGSRHSMNSRVNRSNFNFGFFLQCNNDELLQKRGMWRCYGTAVLEVLNADGPSIQKKIHHSFHNTEVDWGFSNYDQYDTLCNPKDGYVVNDTIKLRCRFTADVPTGANYMWDSKRHTGCIGLRNQGATCYMNSILQSFYFTTGFRRAVYNMDVGTEPNESNIVLAMQRVFYELQMASEAVETNSLTRAFGWDKLDAFNQHDVQEFCRVLLDNLETKMKGTSEEKSIPNLFRGNMKSYIKCLDVDYESSRTESFYDVQLNVLGMDSLERAFEAYTTSEILDDENKYDAGDHGLQRAEKGVKFVELPPILHVQLMRFQYCGVEQKINERFSFPEKMNLASCCELGPMLTEEDCVYSLHAVLVHSGEFHGGHYVTYINVNLHESAVDPTSSAKWCKFDDDVVSRTTTDDAIVSNFGGEKTMNSSAYMLVYVRDNAIDQFLAPIPDSQIPQSVSRTFEMERLHRNREKKKLEEEQLCMGIVLVTPDIVASNHSFDLVDQSIVHDSIPHETVWKHMFTAELYQFVHDRLFEKSAMQKIDMFDSDDEARQARRDNLRRIKSKKFNFRLWRMTDSYSLERTTQKLTSRLRPSEFIDCKTDTRLDTLLSQDFETIYVEFSNNIERPLCEYDTARDLLFFVKYYDTMTDKFTIIGHTMFDCHKRFNLYRSMLCEMIGLPADTELKYYMEHAASYLELVDLTQNYSIGRLVEEQDGGILVVEKVETSTSTQNAKQKMNELFLDVEVEFVQSFYNKKPEEEPFEQFVKRICLDDKLFTVAEEIGARLNVDPKKVLIWTRVSGSRFEPFFDDYMLNTCKGLMTRPVHDPRAYKRYRVQYAIMPFDIDEISKHRIQTKLFWQLPNGHVEELTLFPLKEGTVIDIINEAKRYYPFVEGGSGKFRLLQIGAPPLSNQRVYQIYGENTLISDLDQRTMYKLVSSQALHCRLEEVPIDELDMSPGEFLCPVVHFDREPTKLFGLSFVIKIRNNELMTEVRDRLRRKLNDVSDADFAKYKFALLSRDKLQLCRTIEFNNGEKVNLADMANQTTGVPQVYIGLDHKSPIQHSSEAAIRILN.

The region spanning 31-172 is the MATH domain; the sequence is EGHLSLDIDC…NDTIKLRCRF (142 aa). One can recognise a USP domain in the interval 193–503; it reads IGLRNQGATC…SAYMLVYVRD (311 aa). Catalysis depends on C202, which acts as the Nucleophile. H442 functions as the Proton acceptor in the catalytic mechanism.

Belongs to the peptidase C19 family.

It is found in the nucleus. The enzyme catalyses Thiol-dependent hydrolysis of ester, thioester, amide, peptide and isopeptide bonds formed by the C-terminal Gly of ubiquitin (a 76-residue protein attached to proteins as an intracellular targeting signal).. Hydrolase that deubiquitinates target proteins. May play a role in regulating the levels of endogenous siRNA biogenesis. The protein is Ubiquitin carboxyl-terminal hydrolase 7 of Caenorhabditis elegans.